The following is a 152-amino-acid chain: Bacchus (152 aa).

Residues 29–41 show a composition bias toward basic and acidic residues; that stretch reads DLKAKAAAEDKAA. Residues 29–152 are disordered; sequence DLKAKAAAED…DDGSGSDDQA (124 aa). The segment covering 42-51 has biased composition (low complexity); sequence AADAAGDAAD. A compositionally biased stretch (basic and acidic residues) spans 72–89; sequence ESVKGTKRPAEAKSAESK. Residues 99 to 152 show a composition bias toward acidic residues; it reads GDSDEEEALEEIIEGDSEIESDEYDIPYDGEEDDIECDDDDDDNDDGSGSDDQA.

Expressed in the brain.

It is found in the nucleus. In terms of biological role, negatively regulates tyramine beta-hydroxylase tbh and thus the conversion of tyramine (TA) to octopamine (OA). In tyrosine decarboxylase 2 (Tdc2) neurons, acts in an amine-mediated signaling pathway to negatively regulate acute ethanol sensitivity probably via tbh-mediated depletion of TA. This Drosophila melanogaster (Fruit fly) protein is Bacchus.